Reading from the N-terminus, the 781-residue chain is MSSSSPTGQIASAADIKQENGMESASEGQEAHREVAGGAAVGLSPPAPAPFPLEPGDAATAAARVSGEEGAVAAAAAGAAADQVQLHSELLGRHHHAAAAAAQTPLAFSPDHVACVCEALQQGGNLDRLARFLWSLPQSDLLRGNESLLKARALVAFHQGIYPELYSILESHSFESANHPLLQQLWYKARYTEAERARGRPLGAVDKYRLRRKFPLPRTIWDGEETVYCFKEKSRNALKELYKQNRYPSPAEKRHLAKITGLSLTQVSNWFKNRRQRDRNPSETQSKSESDGNPSTEDESSKGHEDLSPHPLSSSSDGITNLSLSSHMEPVYMQQIGNAKISLSSSGVLLNGSLVPASTSPVFLNGNSFIQGPSGVILNGLNVGNTQAVALNPPKMSSNIVSNGISMTDILGSTSQDVKEFKVLQSSANSATTTSYSPSVPVSFPGLIPSTEVKREGIQTVASQDGGSVVTFTTPVQINQYGIVQIPNSGANSQFLNGSIGFSPLQLPPVSVAASQGNISVSSSTSDGSTFTSESTTVQQGKVFLSSLAPSAVVYTVPNTGQTIGSVKQEGLERSLVFSQLMPVNQNAQVNANLSSENISGSGLHPLASSLVNVSPTHNFSLSPSTLLNPTELNRDIADSQPMSAPVASKSTVTSVSNTNYATLQNCSLITGQDLLSVPMTQAALGEIVPTAEDQVGHPSPAVHQDFVQEHRLVLQSVANMKENFLSNSESKATSSLMMLDSKSKYVLDGMVDTVCEDLETDKKELAKLQTVQLDEDMQDL.

Over residues 1–10 the composition is skewed to polar residues; the sequence is MSSSSPTGQI. Disordered regions lie at residues 1-55 and 270-321; these read MSSS…PLEP and WFKN…GITN. The residue at position 2 (serine 2) is an N-acetylserine. Positions 223–282 form a DNA-binding region, homeobox; that stretch reads GEETVYCFKEKSRNALKELYKQNRYPSPAEKRHLAKITGLSLTQVSNWFKNRRQRDRNPS. 2 stretches are compositionally biased toward basic and acidic residues: residues 278–290 and 299–308; these read DRNP…KSES and ESSKGHEDLS. A Phosphoserine modification is found at serine 640.

The protein belongs to the SIX/Sine oculis homeobox family. In terms of assembly, interacts with EYA3; acts cooperatively with EYA3 to transactivate target genes through interaction and nuclear translocation of EYA3 protein.

The protein resides in the nucleus. The protein localises to the cytoplasm. Functionally, transcriptional regulator which can act as both a transcriptional repressor and activator by binding a DNA sequence on these target genes and is involved in processes like cell differentiation, cell migration and cell survival. Transactivates gene expression by binding a 5'-[CAT]A[CT][CT][CTG]GA[GAT]-3' motif present in the Trex site and a 5'-TCA[AG][AG]TTNC-3' motif present in the MEF3 site of the muscle-specific genes enhancer. Acts cooperatively with EYA proteins to transactivate their target genes through interaction and nuclear translocation of EYA protein. Acts synergistically with SIX1 to regulate target genes involved in formation of various organs, including muscle, kidney, gonad, ganglia, olfactory epithelium and cranial skeleton. Plays a role in several important steps of muscle development. Controls the genesis of hypaxial myogenic progenitors in the dermomyotome by transactivating PAX3 and the delamination and migration of the hypaxial precursors from the ventral lip to the limb buds through the transactivation of PAX3, MET and LBX1. Controls myoblast determination by transactivating MYF5, MYOD1 and MYF6. Controls somitic differentiation in myocyte through MYOG transactivation. Plays a role in synaptogenesis and sarcomere organization by participating in myofiber specialization during embryogenesis by activating fast muscle program in the primary myotome resulting in an up-regulation of fast muscle genes, including ATP2A1, MYL1 and TNNT3. Simultaneously, is also able to activate inhibitors of slow muscle genes, such as SOX6, HRASLS, and HDAC4, thereby restricting the activation of the slow muscle genes. During muscle regeneration, negatively regulates differentiation of muscle satellite cells through down-regulation of MYOG expression. During kidney development regulates the early stages of metanephros development and ureteric bud formation through regulation of GDNF, SALL1, PAX8 and PAX2 expression. Plays a role in gonad development by regulating both testis determination and size determination. In gonadal sex determination, transactivates ZFPM2 by binding a MEF3 consensus sequence, resulting in SRY up-regulation. In gonadal size determination, transactivates NR5A1 by binding a MEF3 consensus sequence resulting in gonadal precursor cell formation regulation. During olfactory development mediates the specification and patterning of olfactory placode through fibroblast growth factor and BMP4 signaling pathways and also regulates epithelial cell proliferation during placode formation. Promotes survival of sensory neurons during early trigeminal gangliogenesis. In the developing dorsal root ganglia, up-regulates SLC12A2 transcription. Regulates early thymus/parathyroid organogenesis through regulation of GCM2 and FOXN1 expression. Forms gustatory papillae during development of the tongue. Also plays a role during embryonic cranial skeleton morphogenesis. The sequence is that of Homeobox protein SIX4 (SIX4) from Homo sapiens (Human).